The chain runs to 176 residues: Mitochondrial inner membrane protein Mpv17 (176 aa).

4 consecutive transmembrane segments (helical) span residues Val-18 to Val-38, Thr-53 to Leu-73, Gly-94 to Met-114, and Leu-131 to Leu-151.

Belongs to the peroxisomal membrane protein PXMP2/4 family. As to expression, high levels in heart, kidney, and brain, intermediate levels in testis, and low levels in liver and spleen.

The protein resides in the mitochondrion inner membrane. Functionally, non-selective channel that modulates the membrane potential under normal conditions and oxidative stress, and is involved in mitochondrial homeostasis. Involved in mitochondrial deoxynucleoside triphosphates (dNTP) pool homeostasis and mitochondrial DNA (mtDNA) maintenance. May be involved in the regulation of reactive oxygen species metabolism and the control of oxidative phosphorylation. The sequence is that of Mitochondrial inner membrane protein Mpv17 from Mus musculus (Mouse).